We begin with the raw amino-acid sequence, 459 residues long: Mitochondrial distribution and morphology protein 34 (459 aa).

The 190-residue stretch at 1–190 folds into the SMP-LTD domain; that stretch reads MSFRFNEAVF…LPSLIFNTSQ (190 aa). The segment covering 338–347 has biased composition (basic and acidic residues); that stretch reads RSNSNDDNAK. The disordered stretch occupies residues 338–375; the sequence is RSNSNDDNAKPRRRKIKCKKTRTPSNLQSQGEQAVDDS. Residues 348–359 show a composition bias toward basic residues; that stretch reads PRRRKIKCKKTR.

It belongs to the MDM34 family. As to quaternary structure, component of the ER-mitochondria encounter structure (ERMES) or MDM complex, composed of MMM1, MDM10, MDM12 and MDM34. Ubiquitinated by a SCF (SKP1-CUL1-F-box protein) E3 ubiquitin-protein ligase complex containing the F-box protein MDM30. Ubiquitination is important for mitochondrial integrity.

It localises to the mitochondrion outer membrane. Its function is as follows. Component of the ERMES/MDM complex, which serves as a molecular tether to connect the endoplasmic reticulum (ER) and mitochondria. Components of this complex are involved in the control of mitochondrial shape and protein biogenesis, and function in nonvesicular lipid trafficking between the ER and mitochondria. MDM34 is required for the interaction of the ER-resident membrane protein MMM1 and the outer mitochondrial membrane-resident beta-barrel protein MDM10. This chain is Mitochondrial distribution and morphology protein 34, found in Saccharomyces cerevisiae (strain YJM789) (Baker's yeast).